We begin with the raw amino-acid sequence, 289 residues long: ATP phosphoribosyltransferase (289 aa).

It belongs to the ATP phosphoribosyltransferase family. Long subfamily. Mg(2+) is required as a cofactor.

The protein localises to the cytoplasm. The enzyme catalyses 1-(5-phospho-beta-D-ribosyl)-ATP + diphosphate = 5-phospho-alpha-D-ribose 1-diphosphate + ATP. Its pathway is amino-acid biosynthesis; L-histidine biosynthesis; L-histidine from 5-phospho-alpha-D-ribose 1-diphosphate: step 1/9. With respect to regulation, feedback inhibited by histidine. Functionally, catalyzes the condensation of ATP and 5-phosphoribose 1-diphosphate to form N'-(5'-phosphoribosyl)-ATP (PR-ATP). Has a crucial role in the pathway because the rate of histidine biosynthesis seems to be controlled primarily by regulation of HisG enzymatic activity. This is ATP phosphoribosyltransferase from Methanosarcina acetivorans (strain ATCC 35395 / DSM 2834 / JCM 12185 / C2A).